The following is a 442-amino-acid chain: tRNA modification GTPase MnmE (442 aa).

(6S)-5-formyl-5,6,7,8-tetrahydrofolate contacts are provided by Arg27, Glu84, and Lys124. One can recognise a TrmE-type G domain in the interval 221 to 366; that stretch reads GLHVVIVGAP…LLDALQAFAE (146 aa). GTP-binding positions include 231 to 236, 250 to 256, and 275 to 278; these read NAGKSS, SKEAGTT, and DTAG. Mg(2+) contacts are provided by Ser235 and Thr256. Lys442 is a (6S)-5-formyl-5,6,7,8-tetrahydrofolate binding site.

The protein belongs to the TRAFAC class TrmE-Era-EngA-EngB-Septin-like GTPase superfamily. TrmE GTPase family. In terms of assembly, homodimer. Heterotetramer of two MnmE and two MnmG subunits. It depends on K(+) as a cofactor.

Its subcellular location is the cytoplasm. Exhibits a very high intrinsic GTPase hydrolysis rate. Involved in the addition of a carboxymethylaminomethyl (cmnm) group at the wobble position (U34) of certain tRNAs, forming tRNA-cmnm(5)s(2)U34. The protein is tRNA modification GTPase MnmE of Brucella suis biovar 1 (strain 1330).